The primary structure comprises 81 residues: Photosystem I iron-sulfur center (81 aa).

2 consecutive 4Fe-4S ferredoxin-type domains span residues 2–31 (SHAVKIYDTCIGCTQCVRACPLDVLEMVPW) and 37–68 (GQIASSPRTEDCVGCKRCETACPTDFLSIRVY). Cys-11, Cys-14, Cys-17, Cys-21, Cys-48, Cys-51, Cys-54, and Cys-58 together coordinate [4Fe-4S] cluster.

As to quaternary structure, the cyanobacterial PSI reaction center is composed of one copy each of PsaA,B,C,D,E,F,I,J,K,L,M and X, and forms trimeric complexes. The cofactor is [4Fe-4S] cluster.

Its subcellular location is the cellular thylakoid membrane. It catalyses the reaction reduced [plastocyanin] + hnu + oxidized [2Fe-2S]-[ferredoxin] = oxidized [plastocyanin] + reduced [2Fe-2S]-[ferredoxin]. Its function is as follows. Apoprotein for the two 4Fe-4S centers FA and FB of photosystem I (PSI); essential for photochemical activity. FB is the terminal electron acceptor of PSI, donating electrons to ferredoxin. The C-terminus interacts with PsaA/B/D and helps assemble the protein into the PSI complex. Required for binding of PsaD and PsaE to PSI. PSI is a plastocyanin/cytochrome c6-ferredoxin oxidoreductase, converting photonic excitation into a charge separation, which transfers an electron from the donor P700 chlorophyll pair to the spectroscopically characterized acceptors A0, A1, FX, FA and FB in turn. The protein is Photosystem I iron-sulfur center of Prochlorococcus marinus subsp. pastoris (strain CCMP1986 / NIES-2087 / MED4).